The sequence spans 804 residues: Zinc finger protein YGR067C (804 aa).

2 C2H2-type zinc fingers span residues 8–30 (YICS…ERSH) and 36–59 (FQCQ…RTVH). Positions 782 to 796 (QEFSASSTDNKQSKN) are enriched in polar residues. The segment at 782–804 (QEFSASSTDNKQSKNIEIFSQIK) is disordered.

It localises to the nucleus. This Saccharomyces cerevisiae (strain ATCC 204508 / S288c) (Baker's yeast) protein is Zinc finger protein YGR067C.